We begin with the raw amino-acid sequence, 132 residues long: Interleukin-5 (132 aa).

Residues 1–17 (MRLPLQLSILTLAWVWA) form the signal peptide. 3 N-linked (GlcNAc...) asparagine glycosylation sites follow: asparagine 45, asparagine 74, and asparagine 88.

This sequence belongs to the IL-5 family. In terms of assembly, homodimer; disulfide-linked. Interacts with IL5RA. Interacts with CSF2RB.

It localises to the secreted. Homodimeric cytokine expressed predominantly by T-lymphocytes and NK cells that plays an important role in the survival, differentiation, and chemotaxis of eosinophils. Also acts on activated and resting B-cells to induce immunoglobulin production, growth, and differentiation. Mechanistically, exerts its biological effects through a receptor composed of IL5RA subunit and the cytokine receptor common subunit beta/CSF2RB. Binding to the receptor leads to activation of various kinases including LYN, SYK and JAK2 and thereby propagates signals through the RAS-MAPK and JAK-STAT5 pathways respectively. This Meriones unguiculatus (Mongolian jird) protein is Interleukin-5 (IL5).